The primary structure comprises 123 residues: Immunoglobulin lambda variable 5-37 (123 aa).

The signal sequence occupies residues 1–19; it reads MAWTPLLLLLLSHCTGSLS. Residues 20–44 form a framework-1 region; the sequence is QPVLTQPPSSSASPGESARLTCTLP. One can recognise an Ig-like domain in the interval 21-123; the sequence is PVLTQPPSSS…YCMIWPSNAS (103 aa). Cysteines 41 and 115 form a disulfide. The complementarity-determining-1 stretch occupies residues 45–53; it reads SDINVGSYN. The tract at residues 54–70 is framework-2; sequence IYWYQQKPGSPPRYLLY. A complementarity-determining-2 region spans residues 71 to 77; that stretch reads YYSDSDK. Residues 78–115 are framework-3; sequence GQGSGVPSRFSGSKDASANTGILLISGLQSEDEADYYC. The interval 116-123 is complementarity-determining-3; it reads MIWPSNAS.

Immunoglobulins are composed of two identical heavy chains and two identical light chains; disulfide-linked.

It is found in the secreted. The protein resides in the cell membrane. In terms of biological role, v region of the variable domain of immunoglobulin light chains that participates in the antigen recognition. Immunoglobulins, also known as antibodies, are membrane-bound or secreted glycoproteins produced by B lymphocytes. In the recognition phase of humoral immunity, the membrane-bound immunoglobulins serve as receptors which, upon binding of a specific antigen, trigger the clonal expansion and differentiation of B lymphocytes into immunoglobulins-secreting plasma cells. Secreted immunoglobulins mediate the effector phase of humoral immunity, which results in the elimination of bound antigens. The antigen binding site is formed by the variable domain of one heavy chain, together with that of its associated light chain. Thus, each immunoglobulin has two antigen binding sites with remarkable affinity for a particular antigen. The variable domains are assembled by a process called V-(D)-J rearrangement and can then be subjected to somatic hypermutations which, after exposure to antigen and selection, allow affinity maturation for a particular antigen. The chain is Immunoglobulin lambda variable 5-37 from Homo sapiens (Human).